A 511-amino-acid polypeptide reads, in one-letter code: Alpha-amylase 2B (511 aa).

The N-terminal stretch at 1 to 15 is a signal peptide; the sequence is MKFFLLLFTIGFCWA. The residue at position 16 (Gln-16) is a Pyrrolidone carboxylic acid. Intrachain disulfides connect Cys-43-Cys-101, Cys-85-Cys-130, and Cys-156-Cys-175. The Ca(2+) site is built by Asn-115, Arg-173, and Asp-182. Residue Arg-210 coordinates chloride. Asp-212 acts as the Nucleophile in catalysis. Residue His-216 coordinates Ca(2+). Catalysis depends on Glu-248, which acts as the Proton donor. Chloride-binding residues include Asn-313 and Arg-352. 2 cysteine pairs are disulfide-bonded: Cys-393–Cys-399 and Cys-465–Cys-477.

The protein belongs to the glycosyl hydrolase 13 family. In terms of assembly, monomer. It depends on Ca(2+) as a cofactor. Chloride serves as cofactor.

Its subcellular location is the secreted. It catalyses the reaction Endohydrolysis of (1-&gt;4)-alpha-D-glucosidic linkages in polysaccharides containing three or more (1-&gt;4)-alpha-linked D-glucose units.. This Homo sapiens (Human) protein is Alpha-amylase 2B (AMY2B).